We begin with the raw amino-acid sequence, 137 residues long: Histone H2B (137 aa).

Positions Met1 to Pro10 are enriched in basic and acidic residues. Residues Met1 to Lys45 are disordered. 2 positions are modified to N6-acetyllysine; alternate: Lys8 and Lys9. Glycyl lysine isopeptide (Lys-Gly) (interchain with G-Cter in SUMO); alternate cross-links involve residues Lys8 and Lys9. Ser12 carries the phosphoserine modification. The residue at position 13 (Lys13) is an N6-acetyllysine. Position 24 is an N6-acetyllysine; alternate (Lys24). A Glycyl lysine isopeptide (Lys-Gly) (interchain with G-Cter in SUMO); alternate cross-link involves residue Lys24. Lys25 participates in a covalent cross-link: Glycyl lysine isopeptide (Lys-Gly) (interchain with G-Cter in SUMO). Lys131 is covalently cross-linked (Glycyl lysine isopeptide (Lys-Gly) (interchain with G-Cter in ubiquitin)).

This sequence belongs to the histone H2B family. In terms of assembly, the nucleosome is a histone octamer containing two molecules each of H2A, H2B, H3 and H4 assembled in one H3-H4 heterotetramer and two H2A-H2B heterodimers. The octamer wraps approximately 147 bp of DNA. Monoubiquitinated by the UBC2-BRE1 complex to form H2BK123ub1. H2BK123ub1 gives a specific tag for epigenetic transcriptional activation and is also prerequisite for H3K4me and H3K79me formation. H2BK123ub1 also modulates the formation of double-strand breaks during meiosis and is a prerequisite for DNA-damage checkpoint activation. In terms of processing, phosphorylated by STE20 to form H2BS10ph during progression through meiotic prophase. May be correlated with chromosome condensation. Post-translationally, acetylated by GCN5 to form H2BK11ac and H2BK16ac. H2BK16ac can also be formed by ESA1. Acetylation of N-terminal lysines and particularly formation of H2BK11acK16ac has a positive effect on transcription. Sumoylation to form H2BK6su or H2BK7su, and probably also H2BK16su or H2BK17su, occurs preferentially near the telomeres and represses gene transcription.

The protein resides in the nucleus. It localises to the chromosome. In terms of biological role, core component of nucleosome. Nucleosomes wrap and compact DNA into chromatin, limiting DNA accessibility to the cellular machineries which require DNA as a template. Histones thereby play a central role in transcription regulation, DNA repair, DNA replication and chromosomal stability. DNA accessibility is regulated via a complex set of post-translational modifications of histones, also called histone code, and nucleosome remodeling. The polypeptide is Histone H2B (HTB1) (Pyricularia oryzae (strain Y34) (Rice blast fungus)).